The following is a 106-amino-acid chain: Small ribosomal subunit protein mS33 (106 aa).

Position 2 is an N-acetylserine (serine 2). Basic residues predominate over residues 85 to 94; that stretch reads LKKLRGKVKP. A disordered region spans residues 85–106; the sequence is LKKLRGKVKPRKGEGKRAAKKK. Basic and acidic residues predominate over residues 95–106; the sequence is RKGEGKRAAKKK.

The protein belongs to the mitochondrion-specific ribosomal protein mS33 family. Component of the mitochondrial ribosome small subunit (28S) which comprises a 12S rRNA and about 30 distinct proteins.

It localises to the mitochondrion. The protein is Small ribosomal subunit protein mS33 of Bos taurus (Bovine).